The primary structure comprises 534 residues: MVRNMDLYRRSACDRCRRQKLRCVRPLKHGACEHPNNIEALEPCERCSRAGTPCVSTLPPPRKLSRVERLSGLTSVGQLDNLPLQPLIPKQASSHRPGSGSAKSCIPPTGQNKGINDANAVTGSLSMPLPDHRSGSNVHRQPEARPLKRRSRDIHPFGTGSPPTELLDAPSFSTRRSPIFSQAEPFALNDLDFAMQPHSGGDLPSHGDDLFADVLFSPHQKPPAGPTVGESLFDNTKAQELDTRECCLRRLTSLSSRLFHDFNNTNSVKLPDLLSFSPCRNLTAPNQATDCPQNIIGRVLESSHTFLDILHGLAPDPRPTSSSDSECSYSNYWEDDEFVPISDEMTYNSTSARPEFRDSSDMCASSSNRDSSDLSAASPTIDMPTTLTILTCYTWLLQAYDTIFSQIYSSLLAGTDSTSPSMPPVLPGLQIGGFSLDQHCDLQIEILIQLSARMLDRIEGKLGVTDTKDSNAPVDDQEWSRNGSILDTASASTILDALFKQNHSETRAKPGKGARAGSVRNIMKNIRAELTVHK.

Residues 13-54 (CDRCRRQKLRCVRPLKHGACEHPNNIEALEPCERCSRAGTPC) constitute a DNA-binding region (zn(2)-C6 fungal-type). 2 disordered regions span residues 88–170 (IPKQ…LDAP) and 350–378 (TSAR…SAAS). Residues 109 to 125 (TGQNKGINDANAVTGSL) are compositionally biased toward polar residues. The segment covering 130-146 (PDHRSGSNVHRQPEARP) has biased composition (basic and acidic residues). Residues 361 to 378 (DMCASSSNRDSSDLSAAS) show a composition bias toward low complexity.

Its subcellular location is the nucleus. Functionally, transcription factor involved in regulation of gene cluster that mediates the biosynthesis of the mycotoxins cytochalasins E and K. In Aspergillus clavatus (strain ATCC 1007 / CBS 513.65 / DSM 816 / NCTC 3887 / NRRL 1 / QM 1276 / 107), this protein is Cytochalasin cluster regulator ccsR.